A 498-amino-acid polypeptide reads, in one-letter code: 3-octaprenyl-4-hydroxybenzoate carboxy-lyase (498 aa).

Asn-177 contacts Mn(2+). Prenylated FMN contacts are provided by residues Ile-180–Arg-182, Arg-194–Leu-196, and Arg-199–Gly-200. Glu-243 provides a ligand contact to Mn(2+). Asp-292 acts as the Proton donor in catalysis.

Belongs to the UbiD family. As to quaternary structure, homohexamer. Requires prenylated FMN as cofactor. The cofactor is Mn(2+).

The protein resides in the cell membrane. The enzyme catalyses a 4-hydroxy-3-(all-trans-polyprenyl)benzoate + H(+) = a 2-(all-trans-polyprenyl)phenol + CO2. It functions in the pathway cofactor biosynthesis; ubiquinone biosynthesis. Catalyzes the decarboxylation of 3-octaprenyl-4-hydroxy benzoate to 2-octaprenylphenol, an intermediate step in ubiquinone biosynthesis. The polypeptide is 3-octaprenyl-4-hydroxybenzoate carboxy-lyase (Methylococcus capsulatus (strain ATCC 33009 / NCIMB 11132 / Bath)).